The chain runs to 1257 residues: MAASTSTSSLSVVGTNLSLPPHRHHRHFHSPSSISTRIRTNRLFLSSSLAFSSPRDARVVHAGLGLRRNTPDVWKHYSSVLSQPTAPVPVRQSCTSCCLASAKKRRSNLPRFVPGAFFDSSSFGLSKDKLRHASVKRVQLPHATVGPDEPHAASTTWQEGVAEKQDLSLFDSELERLEGFLGSELPSHPKLHRGQLKNGIRYLILPNKVPPTRFEAHMEVHVGSIDEEDDEQGIAHMIEHVAFLGSKKREKLLGTGARSNAYTDFHHTVFHIHSPTSTKDSDDLLPSVLDALNEITFHPNFLASRIEKERRAILSELQMMNTIEYRVDCQLLQHLHSENKLSKRFPIGLEEQIKKWDADKIRKFHERWYFPANATLYIVGDIGNIPKTVNQIEAVFGQTGVDNEKGSVATSSAFGAMASFLVPKLSVGLGGNSIERPTNTTDQSKVFKKERHAVRPPVKHTWSLPGSSANLKPPQIFQHELLQNFSINMFCKIPVNKVQTYRDLRIVLMKRIFLSALHFRINTRYKSSNPPFTSVELDHSDSGREGCTVTTLTITAEPKNWQNAIRVAVHEVRRLKEFGVTQGELTRYLDALLRDSEHLAAMIDNVSSVDNLDFIMESDALGHKVMDQSQGHESLIAVAGTVTLDEVNSVGAQVLEFIADFGKLSAPLPAAIVACVPKKVHIEGAGETEFKISSTEITDAMKAGLDEPIEPEPELEVPKELVQSSTLQELKNQRKPAFIPVSPEIEAKKLHDEETGITRLRLANGIPVNYKISKSETQSGVMRLIVGGGRAAEGSDSRGSVIVGVRTLSEGGRVGNFSREQVELFCVNNQINCSLESTEEFISLEFRFTLRNNGMRAAFQLLHMVLEHSVWSDDALDRARQVYLSYYRSIPKSLERSTAHKLMVAMLDGDERFTEPTPSSLENLTLQSVKDAVMNQFVGNNMEVSIVGDFTEEEIESCILDYLGTAQATGNFKNQQQIIPPTFRLSPSSLQSQEVFLNDTDERACAYIAGPAPNRWGFTADGNDLLETIDNASSVNNNGTKSDALQTEGAPRRSLRSHPLFFGITMGLLSEIINSRLFTTVRDSLGLTYDVSFELNLFDRLKLGWYVVSVTSTPSKVHKAVDACKNVLRGLHSNGITVRELDRAKRTLLMRHEAEIKSNAYWLGLLAHLQSSSVPRKDLSCIKDLTSLYEAATIEDTCLAYEQLKVDEDSLYSCIGVSGAQAAQDIAAPVEEEEAGEGYPGVLPMGRGLSTMTRPTT.

The transit peptide at 1-142 directs the protein to the chloroplast; that stretch reads MAASTSTSSL…ASVKRVQLPH (142 aa). His-236 contributes to the Zn(2+) binding site. The Proton acceptor role is filled by Glu-239. Zn(2+) is bound at residue His-240. Glu-309 is a catalytic residue. Residue Glu-316 coordinates Zn(2+). Residues 1233 to 1257 are disordered; that stretch reads EEAGEGYPGVLPMGRGLSTMTRPTT.

The protein belongs to the peptidase M16 family. It depends on Zn(2+) as a cofactor.

It is found in the plastid. It localises to the chloroplast stroma. In terms of biological role, cleaves presequences (transit peptides) from chloroplastic protein precursors. Initially recognizes a precursor by binding to the C-terminus of its transit peptide and then removes the transit peptide in a single endoproteolytic step. In a next step, pursues the cleavage of transit peptide to a subfragment form. The polypeptide is Stromal processing peptidase, chloroplastic (Pisum sativum (Garden pea)).